The primary structure comprises 260 residues: (+)-borneol dehydrogenase 1 (260 aa).

NAD(+) is bound by residues 20-26 (GGASGIG), Asp-44, 67-68 (DV), and 94-96 (NAG). The Proton donor role is filled by Ser-148. NAD(+) contacts are provided by Tyr-161, Lys-165, and Thr-196. The active-site Proton acceptor is Tyr-161. The active-site Proton donor/acceptor is the Lys-165.

Belongs to the short-chain dehydrogenases/reductases (SDR) family.

It carries out the reaction (1R,2S,4R)-borneol + NAD(+) = (1R,4R)-camphor + NADH + H(+). Functionally, involved in the biosynthesis of monoterpene natural products related to camphor. Catalayzes the oxidation of (+)-borneol to (+)-camphor. Shows absolute selectivity towards (+)-borneol. Catalyzes the oxidation of (+)-isoborneol to (-)-camphor. Shows absolute selectivity towards (+)-isoborneol. This chain is (+)-borneol dehydrogenase 1, found in Salvia officinalis (Sage).